The chain runs to 213 residues: Proteasome subunit beta (213 aa).

Positions 1–11 are cleaved as a propeptide — removed in mature form; by autocatalysis; the sequence is MPEQYQESMTG. T12 functions as the Nucleophile in the catalytic mechanism.

It belongs to the peptidase T1B family. The 20S proteasome core is composed of 14 alpha and 14 beta subunits that assemble into four stacked heptameric rings, resulting in a barrel-shaped structure. The two inner rings, each composed of seven catalytic beta subunits, are sandwiched by two outer rings, each composed of seven alpha subunits. The catalytic chamber with the active sites is on the inside of the barrel. Has a gated structure, the ends of the cylinder being occluded by the N-termini of the alpha-subunits. Is capped at one or both ends by the proteasome regulatory ATPase, PAN.

The protein localises to the cytoplasm. The catalysed reaction is Cleavage of peptide bonds with very broad specificity.. Its activity is regulated as follows. The formation of the proteasomal ATPase PAN-20S proteasome complex, via the docking of the C-termini of PAN into the intersubunit pockets in the alpha-rings, triggers opening of the gate for substrate entry. Interconversion between the open-gate and close-gate conformations leads to a dynamic regulation of the 20S proteasome proteolysis activity. Component of the proteasome core, a large protease complex with broad specificity involved in protein degradation. The sequence is that of Proteasome subunit beta from Methanoregula boonei (strain DSM 21154 / JCM 14090 / 6A8).